The primary structure comprises 202 residues: Peptidyl-tRNA hydrolase (202 aa).

Tyr-16 is a binding site for tRNA. Catalysis depends on His-21, which acts as the Proton acceptor. Tyr-68, Asn-70, and Asn-116 together coordinate tRNA.

Belongs to the PTH family. Monomer.

It localises to the cytoplasm. The enzyme catalyses an N-acyl-L-alpha-aminoacyl-tRNA + H2O = an N-acyl-L-amino acid + a tRNA + H(+). Hydrolyzes ribosome-free peptidyl-tRNAs (with 1 or more amino acids incorporated), which drop off the ribosome during protein synthesis, or as a result of ribosome stalling. In terms of biological role, catalyzes the release of premature peptidyl moieties from peptidyl-tRNA molecules trapped in stalled 50S ribosomal subunits, and thus maintains levels of free tRNAs and 50S ribosomes. The chain is Peptidyl-tRNA hydrolase from Treponema pallidum (strain Nichols).